A 129-amino-acid chain; its full sequence is Large-conductance mechanosensitive channel (129 aa).

3 helical membrane-spanning segments follow: residues 8–28 (FAFRGNVIDLAVGVILGAAFS), 30–50 (IIKSLVDSIFMPLIGIIIGGI), and 67–87 (GQFLQASIEFILIAFALFLFV).

This sequence belongs to the MscL family. In terms of assembly, homopentamer.

The protein localises to the cell membrane. Functionally, channel that opens in response to stretch forces in the membrane lipid bilayer. May participate in the regulation of osmotic pressure changes within the cell. This Exiguobacterium sibiricum (strain DSM 17290 / CCUG 55495 / CIP 109462 / JCM 13490 / 255-15) protein is Large-conductance mechanosensitive channel.